Reading from the N-terminus, the 337-residue chain is Tryptophan--tRNA ligase (337 aa).

Residues 11 to 13 and 19 to 20 contribute to the ATP site; these read QPT and GN. The 'HIGH' region motif lies at 12–20; it reads PTGNLHLGN. Asp-135 lines the L-tryptophan pocket. Residues 147–149, Val-190, and 199–203 contribute to the ATP site; these read GED and KMSKS. Positions 199-203 match the 'KMSKS' region motif; sequence KMSKS.

The protein belongs to the class-I aminoacyl-tRNA synthetase family. Homodimer.

The protein resides in the cytoplasm. The enzyme catalyses tRNA(Trp) + L-tryptophan + ATP = L-tryptophyl-tRNA(Trp) + AMP + diphosphate + H(+). Catalyzes the attachment of tryptophan to tRNA(Trp). The polypeptide is Tryptophan--tRNA ligase (Synechocystis sp. (strain ATCC 27184 / PCC 6803 / Kazusa)).